The chain runs to 176 residues: Prion-like protein doppel (176 aa).

Positions 1–25 are cleaved as a signal peptide; the sequence is MRKHLSWWWLATVCMLLFSHLSAVQ. Residues 27–50 form a flexible tail region; the sequence is RGIKHRIKWNRKALPSTAQITEAQ. T43 carries O-linked (GalNAc...) threonine glycosylation. Residues 51-152 are globular; sequence VAENRPGAFI…KHCEFWLERG (102 aa). 2 disulfide bridges follow: C94–C145 and C108–C140. Residues N98 and N110 are each glycosylated (N-linked (GlcNAc...) asparagine). The segment at 122–139 is cu(2+) binding; the sequence is KPDNKLHQQVLWRLVQEL. The GPI-anchor amidated glycine moiety is linked to residue G152. Positions 153-176 are cleaved as a propeptide — removed in mature form; it reads AGLRVTMHQPVLLCLLALIWLTVK.

This sequence belongs to the prion family. Post-translationally, N-glycosylated. N-glycosylated at two distinct sites. O-glycosylated. Expressed in testis, in Sertoli cells, ejaculated spermatozoa and in seminal fluid (at protein level).

The protein resides in the cell membrane. In terms of biological role, required for normal acrosome reaction and for normal male fertility. Can bind Cu(2+). The protein is Prion-like protein doppel (PRND) of Homo sapiens (Human).